The following is a 182-amino-acid chain: Bifunctional dihydrofolate reductase-thymidylate synthase (182 aa).

Residues 1–182 (AICACCKVLN…YFTRINNAYT (182 aa)) form the DHFR domain. An NADP(+)-binding site is contributed by 25-31 (GLGNAGG). Aspartate 40 is a substrate binding site. NADP(+) contacts are provided by residues 93–95 (KTS) and 114–117 (LSRT). Substrate-binding residues include isoleucine 154, tyrosine 160, and threonine 175. Residue 155 to 162 (GGASVYKE) coordinates NADP(+).

The protein in the N-terminal section; belongs to the dihydrofolate reductase family. It in the C-terminal section; belongs to the thymidylate synthase family. As to quaternary structure, homodimer.

The enzyme catalyses (6S)-5,6,7,8-tetrahydrofolate + NADP(+) = 7,8-dihydrofolate + NADPH + H(+). The catalysed reaction is dUMP + (6R)-5,10-methylene-5,6,7,8-tetrahydrofolate = 7,8-dihydrofolate + dTMP. The protein operates within cofactor biosynthesis; tetrahydrofolate biosynthesis; 5,6,7,8-tetrahydrofolate from 7,8-dihydrofolate: step 1/1. Its function is as follows. Bifunctional enzyme. Involved in de novo dTMP biosynthesis. Key enzyme in folate metabolism. Catalyzes an essential reaction for de novo glycine and purine synthesis, DNA precursor synthesis, and for the conversion of dUMP to dTMP. The protein is Bifunctional dihydrofolate reductase-thymidylate synthase of Plasmodium vinckei.